A 430-amino-acid chain; its full sequence is Phosphoribosylamine--glycine ligase (430 aa).

The region spanning 109 to 314 (RGLMNKYGID…FLTIAEHIIN (206 aa)) is the ATP-grasp domain. 136–192 (IREYPGDLAVKPTGLTGGKGVKVMGEQVDREGAVEYAMTLKDQVIILEERLLGEEFT) provides a ligand contact to ATP. The Mg(2+) site is built by Gln-272, Glu-284, and Asn-286. Gln-272, Glu-284, and Asn-286 together coordinate Mn(2+).

It belongs to the GARS family. The cofactor is Mg(2+). Mn(2+) is required as a cofactor.

The catalysed reaction is 5-phospho-beta-D-ribosylamine + glycine + ATP = N(1)-(5-phospho-beta-D-ribosyl)glycinamide + ADP + phosphate + H(+). It functions in the pathway purine metabolism; IMP biosynthesis via de novo pathway; N(1)-(5-phospho-D-ribosyl)glycinamide from 5-phospho-alpha-D-ribose 1-diphosphate: step 2/2. In Methanocorpusculum labreanum (strain ATCC 43576 / DSM 4855 / Z), this protein is Phosphoribosylamine--glycine ligase.